A 214-amino-acid polypeptide reads, in one-letter code: Ras-like protein rasZ (214 aa).

16 to 23 (GDGGVGKT) provides a ligand contact to GTP. Residues 38-46 (YDPTIEDSY) carry the Effector region motif. GTP is bound by residues 63–67 (DTAGQ) and 122–125 (NKSD). Cysteine methyl ester is present on cysteine 211. Residue cysteine 211 is the site of S-geranylgeranyl cysteine attachment. Residues 212–214 (KMM) constitute a propeptide, removed in mature form.

The protein belongs to the small GTPase superfamily. Ras family.

The protein localises to the cell membrane. It carries out the reaction GTP + H2O = GDP + phosphate + H(+). Functionally, ras proteins bind GDP/GTP and possess intrinsic GTPase activity. This is Ras-like protein rasZ (rasZ) from Dictyostelium discoideum (Social amoeba).